A 143-amino-acid chain; its full sequence is MSDPSKTNQCPPPCCPPKPCCPPKPCCPQKPPCCPKSPCCPPKSPCCPPKPCPCPPPCPCPCPATCPCPLKPPCCPQKCSCCPKKCTCCPQPPPCCAQPTCCSSENKTESDSDTSGQTLEKGSQSPQSPPGAQGNWNQKKSNK.

Residues Ser-37, Ser-44, and Ser-110 each carry the phosphoserine modification. A disordered region spans residues Cys-101–Lys-143. A compositionally biased stretch (polar residues) spans Asp-113–Pro-126. Residue Ser-128 is modified to Phosphoserine. The span at Gly-134 to Lys-143 shows a compositional bias: polar residues.

In terms of tissue distribution, testis. Is selectively expressed in the spermatids of seminiferous tubules.

Its subcellular location is the cytoplasm. The protein resides in the mitochondrion membrane. Involved in sperm motility. Its absence is associated with genetic background dependent male infertility. Infertility may be due to reduced sperm motility in the female reproductive tract and inability to penetrate the oocyte zona pellucida. The protein is Sperm mitochondrial-associated cysteine-rich protein (Smcp) of Mus musculus (Mouse).